The sequence spans 610 residues: Threonine--tRNA ligase (610 aa).

A disordered region spans residues 1–29 (MANHDQQTVSSAAATTSASPSPVVLPKTS). The segment covering 8–24 (TVSSAAATTSASPSPVV) has biased composition (low complexity). Positions 209–502 (DHRRIGKDLD…MTENYAGDYP (294 aa)) are catalytic. Residues cysteine 302, histidine 353, and histidine 479 each contribute to the Zn(2+) site.

This sequence belongs to the class-II aminoacyl-tRNA synthetase family. In terms of assembly, homodimer. The cofactor is Zn(2+).

The protein resides in the cytoplasm. It catalyses the reaction tRNA(Thr) + L-threonine + ATP = L-threonyl-tRNA(Thr) + AMP + diphosphate + H(+). Its function is as follows. Catalyzes the attachment of threonine to tRNA(Thr) in a two-step reaction: L-threonine is first activated by ATP to form Thr-AMP and then transferred to the acceptor end of tRNA(Thr). Also edits incorrectly charged L-seryl-tRNA(Thr). The sequence is that of Threonine--tRNA ligase from Synechococcus sp. (strain WH7803).